A 66-amino-acid chain; its full sequence is Large ribosomal subunit protein bL33c (66 aa).

In terms of assembly, component of the chloroplast large ribosomal subunit (LSU). Mature 70S chloroplast ribosomes of higher plants consist of a small (30S) and a large (50S) subunit. The 30S small subunit contains 1 molecule of ribosomal RNA (16S rRNA) and 24 different proteins. The 50S large subunit contains 3 rRNA molecules (23S, 5S and 4.5S rRNA) and 33 different proteins.

It localises to the plastid. It is found in the chloroplast. Its function is as follows. Component of the chloroplast ribosome (chloro-ribosome), a dedicated translation machinery responsible for the synthesis of chloroplast genome-encoded proteins, including proteins of the transcription and translation machinery and components of the photosynthetic apparatus. In Spinacia oleracea (Spinach), this protein is Large ribosomal subunit protein bL33c (rpl33).